The sequence spans 412 residues: Proline-rich protein 30 (412 aa).

Composition is skewed to polar residues over residues 1-15 (MLPQ…QTSV) and 23-39 (GFSQ…QPLS). Disordered stretches follow at residues 1–88 (MLPQ…HPYS), 123–174 (PLTP…SNRQ), and 317–412 (RPKE…KSSV). Low complexity-rich tracts occupy residues 50–59 (PFSSTQSRRP), 126–142 (PSFS…PHSP), and 334–350 (QLPA…ADPV). Polar residues predominate over residues 353–372 (TPSQTRSFRSAGLQSPNSPR).

The chain is Proline-rich protein 30 (PRR30) from Homo sapiens (Human).